The sequence spans 197 residues: Recombination protein RecR (197 aa).

Residues 55–70 (CVQCRDFTESEVCAIC) form a C4-type zinc finger. Residues 78–173 (QQLCVVESPA…RPSRLAQGMP (96 aa)) form the Toprim domain.

It belongs to the RecR family.

Its function is as follows. May play a role in DNA repair. It seems to be involved in an RecBC-independent recombinational process of DNA repair. It may act with RecF and RecO. The sequence is that of Recombination protein RecR from Xanthomonas campestris pv. campestris (strain 8004).